The following is a 123-amino-acid chain: Amoebiasin-2 (123 aa).

The first 16 residues, 1–16 (MKQFIFFALLCTSTYA), serve as a signal peptide directing secretion. The BC loop signature appears at 45–50 (NPSTGY). Positions 71–81 (EPHPSGMVGFP) match the DE loop motif. The FG loop signature appears at 105–114 (PWEKGKEPLR).

The protein belongs to the protease inhibitor I42 family. As to quaternary structure, monomer. May form homodimer. Interacts with cysteine protease CP2. Interacts with cysteine protease CP5.

Its subcellular location is the cytoplasmic vesicle. The protein localises to the lysosome. It is found in the phagosome. Its function is as follows. Cysteine protease inhibitor. Inhibits cysteine proteases CP1, CP2 and to a lesser extent CP5. The sequence is that of Amoebiasin-2 from Entamoeba histolytica (strain ATCC 30459 / HM-1:IMSS / ABRM).